Reading from the N-terminus, the 592-residue chain is Aspartate--tRNA(Asp/Asn) ligase (592 aa).

An L-aspartate-binding site is contributed by E173. Residues 197 to 200 form an aspartate region; the sequence is QLFK. Residue R219 participates in L-aspartate binding. Residues 219-221 and Q228 contribute to the ATP site; that span reads RDE. An L-aspartate-binding site is contributed by H451. E486 contacts ATP. R493 lines the L-aspartate pocket. 538-541 lines the ATP pocket; that stretch reads GLDR.

Belongs to the class-II aminoacyl-tRNA synthetase family. Type 1 subfamily. In terms of assembly, homodimer.

It is found in the cytoplasm. The catalysed reaction is tRNA(Asx) + L-aspartate + ATP = L-aspartyl-tRNA(Asx) + AMP + diphosphate. Functionally, aspartyl-tRNA synthetase with relaxed tRNA specificity since it is able to aspartylate not only its cognate tRNA(Asp) but also tRNA(Asn). Reaction proceeds in two steps: L-aspartate is first activated by ATP to form Asp-AMP and then transferred to the acceptor end of tRNA(Asp/Asn). The chain is Aspartate--tRNA(Asp/Asn) ligase from Alkalilimnicola ehrlichii (strain ATCC BAA-1101 / DSM 17681 / MLHE-1).